A 145-amino-acid polypeptide reads, in one-letter code: uncharacterized protein (145 aa).

Residues 1-21 (MWFLVKATFWFSLVLVLLPFL) traverse the membrane as a helical segment. The interval 109–145 (TPAESVPSAEATEKAEPAFKRMPVPEHRLDPGPASGK) is disordered. The span at 119–138 (ATEKAEPAFKRMPVPEHRLD) shows a compositional bias: basic and acidic residues.

It localises to the membrane. This is an uncharacterized protein from Rhizobium meliloti (strain 1021) (Ensifer meliloti).